Reading from the N-terminus, the 537-residue chain is Zinc finger and BTB domain-containing protein 18 (537 aa).

Positions 24-91 constitute a BTB domain; the sequence is CDSTVLVGDA…MYEGKLQFKS (68 aa). The segment covering 122-143 has biased composition (basic and acidic residues); sequence TAEADSTKREEDTSSCSDKVES. Disordered stretches follow at residues 122–232 and 335–355; these read TAEA…RVSA and ASEL…LGGD. Composition is skewed to low complexity over residues 182–195 and 208–229; these read RLPS…TTSP and SPAG…ASRR. 4 consecutive C2H2-type zinc fingers follow at residues 385–407, 425–447, 453–475, and 481–504; these read FMCP…LSTH, PTCS…ERTH, YTCT…AVVH, and HACK…RKFH.

The protein belongs to the krueppel C2H2-type zinc-finger protein family. ZBTB18 subfamily.

It is found in the nucleus. Transcriptional repressor that plays a role in various developmental processes. Specifically binds the consensus DNA sequence 5'-[AC]ACATCTG[GT][AC]-3' which contains the E box core, and acts by recruiting chromatin remodeling multiprotein complexes. The polypeptide is Zinc finger and BTB domain-containing protein 18 (zbtb18) (Danio rerio (Zebrafish)).